A 235-amino-acid polypeptide reads, in one-letter code: 2-C-methyl-D-erythritol 4-phosphate cytidylyltransferase (235 aa).

The protein belongs to the IspD/TarI cytidylyltransferase family. IspD subfamily. In terms of assembly, homodimer.

It carries out the reaction 2-C-methyl-D-erythritol 4-phosphate + CTP + H(+) = 4-CDP-2-C-methyl-D-erythritol + diphosphate. It functions in the pathway isoprenoid biosynthesis; isopentenyl diphosphate biosynthesis via DXP pathway; isopentenyl diphosphate from 1-deoxy-D-xylulose 5-phosphate: step 2/6. Its function is as follows. Catalyzes the formation of 4-diphosphocytidyl-2-C-methyl-D-erythritol from CTP and 2-C-methyl-D-erythritol 4-phosphate (MEP). This chain is 2-C-methyl-D-erythritol 4-phosphate cytidylyltransferase, found in Serratia proteamaculans (strain 568).